An 81-amino-acid chain; its full sequence is Putative defensin-like protein 52 (81 aa).

An N-terminal signal peptide occupies residues Met1–Ala20. Intrachain disulfides connect Cys31–Cys55 and Cys41–Cys64.

This sequence belongs to the DEFL family.

The protein resides in the secreted. The chain is Putative defensin-like protein 52 from Arabidopsis thaliana (Mouse-ear cress).